The chain runs to 147 residues: Peptide deformylase (147 aa).

C88 and H130 together coordinate Fe cation. Residue E131 is part of the active site. Residue H134 coordinates Fe cation.

This sequence belongs to the polypeptide deformylase family. The cofactor is Fe(2+).

It carries out the reaction N-terminal N-formyl-L-methionyl-[peptide] + H2O = N-terminal L-methionyl-[peptide] + formate. Removes the formyl group from the N-terminal Met of newly synthesized proteins. Requires at least a dipeptide for an efficient rate of reaction. N-terminal L-methionine is a prerequisite for activity but the enzyme has broad specificity at other positions. The polypeptide is Peptide deformylase (Clostridium botulinum (strain Alaska E43 / Type E3)).